Consider the following 201-residue polypeptide: ATP-dependent Clp protease proteolytic subunit 2 (201 aa).

Residue Ser-101 is the Nucleophile of the active site. His-126 is an active-site residue.

This sequence belongs to the peptidase S14 family. Fourteen ClpP subunits assemble into 2 heptameric rings which stack back to back to give a disk-like structure with a central cavity, resembling the structure of eukaryotic proteasomes.

The protein localises to the cytoplasm. It carries out the reaction Hydrolysis of proteins to small peptides in the presence of ATP and magnesium. alpha-casein is the usual test substrate. In the absence of ATP, only oligopeptides shorter than five residues are hydrolyzed (such as succinyl-Leu-Tyr-|-NHMec, and Leu-Tyr-Leu-|-Tyr-Trp, in which cleavage of the -Tyr-|-Leu- and -Tyr-|-Trp bonds also occurs).. Functionally, cleaves peptides in various proteins in a process that requires ATP hydrolysis. Has a chymotrypsin-like activity. Plays a major role in the degradation of misfolded proteins. This chain is ATP-dependent Clp protease proteolytic subunit 2, found in Prochlorococcus marinus subsp. pastoris (strain CCMP1986 / NIES-2087 / MED4).